Reading from the N-terminus, the 1155-residue chain is Cilia- and flagella-associated protein 251 (1155 aa).

Composition is skewed to basic and acidic residues over residues 1 to 19 (MSDA…GETE) and 31 to 59 (KEVE…KTGE). 2 disordered regions span residues 1-144 (MSDA…KLSL) and 167-225 (LDQI…DIQS). Residues 60 to 69 (EEGEEEEEKE) are compositionally biased toward acidic residues. Over residues 70-95 (EEGKKDKKIVMEETEEKAGESQEKEA) the composition is skewed to basic and acidic residues. Residues 99–111 (QEETTVEPQEVTE) show a composition bias toward low complexity. Composition is skewed to polar residues over residues 118–128 (TQITDSQSVTS) and 172–182 (PEEQQISSPER). The span at 201–220 (GQERRDLEPENREEGQERTV) shows a compositional bias: basic and acidic residues. 14 WD repeats span residues 341-383 (PVHT…IWKW), 391-431 (ACTL…AWYE), 442-481 (LLTE…VWDI), 499-534 (PCKL…FYDH), 537-597 (SIVN…VYHL), 601-641 (GTKL…VWNY), 647-684 (LFSR…ILDA), 694-730 (PFKY…MLVV), 737-780 (WEYL…GYDL), 791-831 (LDIH…LFNA), 837-883 (RKTL…ILPV), 889-927 (KTSA…QWKI), 965-1005 (YFYY…FYPS), and 1025-1065 (GKLI…GYTN).

Its subcellular location is the cytoplasm. The protein resides in the cytoskeleton. It is found in the cilium axoneme. The protein localises to the cell projection. It localises to the cilium. Its subcellular location is the flagellum. Functionally, involved in spermatozoa motility. May also regulate cilium motility through its role in the assembly of the axonemal radial spokes. This Pongo abelii (Sumatran orangutan) protein is Cilia- and flagella-associated protein 251.